Reading from the N-terminus, the 189-residue chain is Probable nicotinate-nucleotide adenylyltransferase (189 aa).

The protein belongs to the NadD family.

It carries out the reaction nicotinate beta-D-ribonucleotide + ATP + H(+) = deamido-NAD(+) + diphosphate. It functions in the pathway cofactor biosynthesis; NAD(+) biosynthesis; deamido-NAD(+) from nicotinate D-ribonucleotide: step 1/1. In terms of biological role, catalyzes the reversible adenylation of nicotinate mononucleotide (NaMN) to nicotinic acid adenine dinucleotide (NaAD). This chain is Probable nicotinate-nucleotide adenylyltransferase, found in Cereibacter sphaeroides (strain ATCC 17023 / DSM 158 / JCM 6121 / CCUG 31486 / LMG 2827 / NBRC 12203 / NCIMB 8253 / ATH 2.4.1.) (Rhodobacter sphaeroides).